Consider the following 304-residue polypeptide: Acetylglutamate kinase (304 aa).

Substrate-binding positions include 82 to 83, R104, and N197; that span reads GG.

It belongs to the acetylglutamate kinase family. ArgB subfamily.

It localises to the cytoplasm. It carries out the reaction N-acetyl-L-glutamate + ATP = N-acetyl-L-glutamyl 5-phosphate + ADP. Its pathway is amino-acid biosynthesis; L-arginine biosynthesis; N(2)-acetyl-L-ornithine from L-glutamate: step 2/4. In terms of biological role, catalyzes the ATP-dependent phosphorylation of N-acetyl-L-glutamate. This chain is Acetylglutamate kinase, found in Prochlorococcus marinus (strain SARG / CCMP1375 / SS120).